Here is a 438-residue protein sequence, read N- to C-terminus: GTPase Der (438 aa).

EngA-type G domains are found at residues 4 to 168 (PVVA…DDNS) and 177 to 352 (TKVC…NNYS). GTP contacts are provided by residues 10 to 17 (GRANVGKS), 57 to 61 (DTGGL), 120 to 123 (NKID), 183 to 190 (GKPNVGKS), 230 to 234 (DTAGL), and 295 to 298 (NKWD). One can recognise a KH-like domain in the interval 353 to 437 (MRISTGVLND…PLQFEFKTRG (85 aa)).

This sequence belongs to the TRAFAC class TrmE-Era-EngA-EngB-Septin-like GTPase superfamily. EngA (Der) GTPase family. In terms of assembly, associates with the 50S ribosomal subunit.

Its function is as follows. GTPase that plays an essential role in the late steps of ribosome biogenesis. This Finegoldia magna (strain ATCC 29328 / DSM 20472 / WAL 2508) (Peptostreptococcus magnus) protein is GTPase Der.